Reading from the N-terminus, the 229-residue chain is Nisin biosynthesis regulatory protein NisR (229 aa).

The Response regulatory domain occupies 4–117 (KILIVDDDQE…QLVAKVEANI (114 aa)). The residue at position 53 (Asp53) is a 4-aspartylphosphate. Positions 132 to 229 (EIRRDLGPIT…VRGLGYQWHG (98 aa)) form a DNA-binding region, ompR/PhoB-type.

Post-translationally, phosphorylated by NisK.

Member of the two-component regulatory system NisK/NisR involved in the regulation of the biosynthesis of lantibiotic nisin. NisR may function as a regulatory protein. This is Nisin biosynthesis regulatory protein NisR (nisR) from Lactococcus lactis subsp. lactis (Streptococcus lactis).